A 978-amino-acid chain; its full sequence is Alanine--tRNA ligase, chloroplastic/mitochondrial (978 aa).

Zn(2+) is bound by residues H655, H659, C758, and H762. A Glycyl lysine isopeptide (Lys-Gly) (interchain with G-Cter in ubiquitin) cross-link involves residue K773.

It belongs to the class-II aminoacyl-tRNA synthetase family. Monomer. It depends on Zn(2+) as a cofactor.

Its subcellular location is the plastid. It localises to the chloroplast. The protein resides in the mitochondrion. The catalysed reaction is tRNA(Ala) + L-alanine + ATP = L-alanyl-tRNA(Ala) + AMP + diphosphate. Its function is as follows. Catalyzes the attachment of alanine to tRNA(Ala) in a two-step reaction: alanine is first activated by ATP to form Ala-AMP and then transferred to the acceptor end of tRNA(Ala). Also edits incorrectly charged tRNA(Ala) via its editing domain. The polypeptide is Alanine--tRNA ligase, chloroplastic/mitochondrial (EMB86) (Arabidopsis thaliana (Mouse-ear cress)).